We begin with the raw amino-acid sequence, 415 residues long: Lipid II:glycine glycyltransferase (415 aa).

Belongs to the FemABX family.

The protein resides in the cytoplasm. The catalysed reaction is beta-D-GlcNAc-(1-&gt;4)-Mur2Ac(oyl-L-Ala-D-isoglutaminyl-L-Lys-D-Ala-D-Ala)-di-trans,octa-cis-undecaprenyl diphosphate + glycyl-tRNA(Gly) = beta-D-GlcNAc-(1-&gt;4)-Mur2Ac(oyl-L-Ala-D-isoglutaminyl-L-Lys-(N(6)-Gly)-D-Ala-D-Ala)-di-trans,octa-cis-undecaprenyl diphosphate + tRNA(Gly) + H(+). Catalyzes the incorporation of amino acid(s) into the interchain peptide bridge of peptidoglycan, using aminoacyl-tRNA as amino acid donor. In Staphylococcus saprophyticus subsp. saprophyticus (strain ATCC 15305 / DSM 20229 / NCIMB 8711 / NCTC 7292 / S-41), this protein is Lipid II:glycine glycyltransferase (femX).